Reading from the N-terminus, the 622-residue chain is tRNA uridine 5-carboxymethylaminomethyl modification enzyme MnmG (622 aa).

Gly-10–Gly-15 contributes to the FAD binding site. Gly-269 to Phe-283 serves as a coordination point for NAD(+).

This sequence belongs to the MnmG family. In terms of assembly, homodimer. Heterotetramer of two MnmE and two MnmG subunits. FAD serves as cofactor.

It is found in the cytoplasm. In terms of biological role, NAD-binding protein involved in the addition of a carboxymethylaminomethyl (cmnm) group at the wobble position (U34) of certain tRNAs, forming tRNA-cmnm(5)s(2)U34. The chain is tRNA uridine 5-carboxymethylaminomethyl modification enzyme MnmG from Bartonella quintana (strain Toulouse) (Rochalimaea quintana).